We begin with the raw amino-acid sequence, 434 residues long: Probable phosphoglucosamine mutase (434 aa).

Catalysis depends on Ser-91, which acts as the Phosphoserine intermediate. The Mg(2+) site is built by Ser-91, Asp-229, Asp-231, and Asp-233. Residue Ser-91 is modified to Phosphoserine.

The protein belongs to the phosphohexose mutase family. Requires Mg(2+) as cofactor. Activated by phosphorylation.

The enzyme catalyses alpha-D-glucosamine 1-phosphate = D-glucosamine 6-phosphate. In terms of biological role, catalyzes the conversion of glucosamine-6-phosphate to glucosamine-1-phosphate. This chain is Probable phosphoglucosamine mutase, found in Methanosarcina acetivorans (strain ATCC 35395 / DSM 2834 / JCM 12185 / C2A).